The following is a 195-amino-acid chain: Large ribosomal subunit protein eL18 (195 aa).

Lysine 126 is covalently cross-linked (Glycyl lysine isopeptide (Lys-Gly) (interchain with G-Cter in SUMO2)). At serine 137 the chain carries Phosphoserine. The segment at 158–195 is disordered; it reads HFGKAPGTPHSHTKPYVRSKGRKFERARGRRASRGYKN. Threonine 165 is subject to Phosphothreonine. Basic residues-rich tracts occupy residues 168 to 178 and 185 to 195; these read SHTKPYVRSKG and RGRRASRGYKN. Residue lysine 171 forms a Glycyl lysine isopeptide (Lys-Gly) (interchain with G-Cter in SUMO2) linkage.

Belongs to the eukaryotic ribosomal protein eL18 family. Component of the large ribosomal subunit.

It localises to the cytoplasm. Its subcellular location is the cytosol. The protein localises to the rough endoplasmic reticulum. Functionally, component of the large ribosomal subunit. The protein is Large ribosomal subunit protein eL18 (RPL18) of Sus scrofa (Pig).